A 528-amino-acid chain; its full sequence is Phosphoenolpyruvate carboxykinase (ATP) (528 aa).

Positions 56, 192, and 198 each coordinate substrate. ATP contacts are provided by residues lysine 198, histidine 217, and 233–241 (GLSGTGKTT). Residues lysine 198 and histidine 217 each coordinate Mn(2+). A Mn(2+)-binding site is contributed by aspartate 254. Positions 282, 319, and 444 each coordinate ATP. Arginine 319 contributes to the substrate binding site.

It belongs to the phosphoenolpyruvate carboxykinase (ATP) family. The cofactor is Mn(2+).

Its subcellular location is the cytoplasm. It catalyses the reaction oxaloacetate + ATP = phosphoenolpyruvate + ADP + CO2. Its pathway is carbohydrate biosynthesis; gluconeogenesis. Its function is as follows. Involved in the gluconeogenesis. Catalyzes the conversion of oxaloacetate (OAA) to phosphoenolpyruvate (PEP) through direct phosphoryl transfer between the nucleoside triphosphate and OAA. This chain is Phosphoenolpyruvate carboxykinase (ATP), found in Bacillus cereus (strain AH187).